The primary structure comprises 68 residues: Large ribosomal subunit protein uL29 (68 aa).

It belongs to the universal ribosomal protein uL29 family.

In Streptococcus sanguinis (strain SK36), this protein is Large ribosomal subunit protein uL29.